A 736-amino-acid polypeptide reads, in one-letter code: Phosphoribosylformylglycinamidine synthase subunit PurL (736 aa).

Histidine 48 is a catalytic residue. ATP is bound by residues tyrosine 51 and lysine 90. Glutamate 92 contacts Mg(2+). Residues serine 93–histidine 96 and arginine 115 each bind substrate. Catalysis depends on histidine 94, which acts as the Proton acceptor. Aspartate 116 lines the Mg(2+) pocket. Position 239 (glutamine 239) interacts with substrate. Position 267 (aspartate 267) interacts with Mg(2+). Glutamate 311–glutamine 313 is a substrate binding site. Positions 492 and 529 each coordinate ATP. Mg(2+) is bound at residue asparagine 530. Serine 532 contacts substrate.

This sequence belongs to the FGAMS family. In terms of assembly, monomer. Part of the FGAM synthase complex composed of 1 PurL, 1 PurQ and 2 PurS subunits.

It localises to the cytoplasm. The enzyme catalyses N(2)-formyl-N(1)-(5-phospho-beta-D-ribosyl)glycinamide + L-glutamine + ATP + H2O = 2-formamido-N(1)-(5-O-phospho-beta-D-ribosyl)acetamidine + L-glutamate + ADP + phosphate + H(+). The protein operates within purine metabolism; IMP biosynthesis via de novo pathway; 5-amino-1-(5-phospho-D-ribosyl)imidazole from N(2)-formyl-N(1)-(5-phospho-D-ribosyl)glycinamide: step 1/2. In terms of biological role, part of the phosphoribosylformylglycinamidine synthase complex involved in the purines biosynthetic pathway. Catalyzes the ATP-dependent conversion of formylglycinamide ribonucleotide (FGAR) and glutamine to yield formylglycinamidine ribonucleotide (FGAM) and glutamate. The FGAM synthase complex is composed of three subunits. PurQ produces an ammonia molecule by converting glutamine to glutamate. PurL transfers the ammonia molecule to FGAR to form FGAM in an ATP-dependent manner. PurS interacts with PurQ and PurL and is thought to assist in the transfer of the ammonia molecule from PurQ to PurL. The chain is Phosphoribosylformylglycinamidine synthase subunit PurL from Beijerinckia indica subsp. indica (strain ATCC 9039 / DSM 1715 / NCIMB 8712).